The chain runs to 469 residues: Uronate isomerase (469 aa).

The protein belongs to the metallo-dependent hydrolases superfamily. Uronate isomerase family.

It carries out the reaction D-glucuronate = D-fructuronate. The catalysed reaction is aldehydo-D-galacturonate = keto-D-tagaturonate. Its pathway is carbohydrate metabolism; pentose and glucuronate interconversion. This Pectobacterium atrosepticum (strain SCRI 1043 / ATCC BAA-672) (Erwinia carotovora subsp. atroseptica) protein is Uronate isomerase.